Reading from the N-terminus, the 60-residue chain is uncharacterized protein (60 aa).

This is an uncharacterized protein from Bacillus subtilis (strain 168).